We begin with the raw amino-acid sequence, 281 residues long: Transcription factor lfc1 (281 aa).

The segment at residues 60–87 is a DNA-binding region (zn(2)-C6 fungal-type); sequence CLTCRMKKIKCDETKPTCARCTHGQREC.

It localises to the nucleus. Its function is as follows. Transcription factor that acts as a negative regulator of basidioma development via repressing the expression of genes involved in basidioma development, including hydrophobins such as Hyd-1 and Hyd-8, lectins such as JRL1, as well as the fruiting body differentiation gene FVFD16. This Flammulina velutipes (Agaricus velutipes) protein is Transcription factor lfc1.